We begin with the raw amino-acid sequence, 291 residues long: MASVALSEAEKVYIVHGVQEDLRVDGRGCEDYRCVEVETDVVSNTSGSARVKLGHTDILVGVKAEMGTPKLEKPNEGYLEFFVDCSANATPEFEGRGGDDLGTEIANTLYRIFNNKSSVDLRSLCISPREHCWVLYVDVLLLECGGNLFDAISIAVKAALFNTRIPRVRVLEDEEGAKDIELSDDPYDCIRLSVENVPCIVTLCKIGCRHVVDATLQEEACSLASLLVSVTSKGVVTCMRKVGKGSLDPESIFEMMESSKRVGKVLHVSLQSLLHKEESLGPKRPRVGFLG.

N-acetylalanine is present on Ala-2. Lys-116 carries the post-translational modification N6-acetyllysine.

It belongs to the RNase PH family. In terms of assembly, component of the RNA exosome core complex (Exo-9), composed of EXOSC1, EXOSC2, EXOSC3, EXOSC4, EXOSC5, EXOSC6, EXOSC7, EXOSC8 and EXOSC9; within the complex interacts with EXOSC2 and EXOSC4. The catalytically inactive RNA exosome core complex (Exo-9) associates with the catalytic subunit EXOSC10/RRP6. Exo-9 may associate with DIS3 to form the nucleolar exosome complex, or DIS3L to form the cytoplasmic exosome complex. Exo-9 is formed by a hexameric base ring consisting of the heterodimers EXOSC4-EXOSC9, EXOSC5-EXOSC8 and EXOSC6-EXOSC7, and a cap ring consisting of EXOSC1, EXOSC2 and EXOSC3. The RNA exosome complex associates with cofactors C1D/RRP47, MPHOSPH6/MPP6 and MTREX/MTR4. Interacts with ZC3HAV1. Interacts with DIS3; the interaction is direct.

It localises to the nucleus. Its subcellular location is the nucleolus. It is found in the cytoplasm. Its function is as follows. Non-catalytic component of the RNA exosome complex which has 3'-&gt;5' exoribonuclease activity and participates in a multitude of cellular RNA processing and degradation events. In the nucleus, the RNA exosome complex is involved in proper maturation of stable RNA species such as rRNA, snRNA and snoRNA, in the elimination of RNA processing by-products and non-coding 'pervasive' transcripts, such as antisense RNA species and promoter-upstream transcripts (PROMPTs), and of mRNAs with processing defects, thereby limiting or excluding their export to the cytoplasm. The RNA exosome may be involved in Ig class switch recombination (CSR) and/or Ig variable region somatic hypermutation (SHM) by targeting AICDA deamination activity to transcribed dsDNA substrates. In the cytoplasm, the RNA exosome complex is involved in general mRNA turnover and specifically degrades inherently unstable mRNAs containing AU-rich elements (AREs) within their 3' untranslated regions, and in RNA surveillance pathways, preventing translation of aberrant mRNAs. It seems to be involved in degradation of histone mRNA. The catalytic inactive RNA exosome core complex of 9 subunits (Exo-9) is proposed to play a pivotal role in the binding and presentation of RNA for ribonucleolysis, and to serve as a scaffold for the association with catalytic subunits and accessory proteins or complexes. The polypeptide is Exosome complex exonuclease RRP42 (Exosc7) (Mus musculus (Mouse)).